The following is a 584-amino-acid chain: MNFFMDIRDKVFAATGKVKADTIFFGGLLINVNTKEMLYRDIAVKEGYIVGIGDVSSLKGDETEMIDVTGKHLCPGLMDGHVHFESSMVTLSQFAVPALAHGTTSVVIDPHEIANVLGRGGIELVLDEAATLPLNAFVAVSSCVPATSFETAGASIDVDDIVSLIANENVVGLGEMMDYPGVVFCDETKLSMIRTALKERLVVDGHCPALSREQLFGYMCAGISTDHESIEYEEALEKLRLGMKLMIREGSAAKALDKFLPRLIGDGVSLENVFFVTDDKHPSDLLKGYMDVIVRRAIELGLSPLDAISMCTINAAKHYRVDHIVGSLSMGRKADIIVLEDLEKFIIDSVYASGRPVESFVPSYEYPDTVFNTVKFDAVTATDLQIMSDADKDHRVRVIKVVPDLIVTENETFVLHSDRHGILMPDVENDVLSVAVIERHGKNGNIGTGFIKGMGLRNGAIGQSIGHDSHNVVVTGVDHSDMALCANTIRSMNGGICVVSNGKVVEQLELPFAGLLSTLPAEEVEKKLTDLHKAVKEIGCALPAPFITHSFIALPVIPSLRLTDMGLFDVDKFSLVSPIDEVME.

The protein belongs to the metallo-dependent hydrolases superfamily. Adenine deaminase family. It depends on Mn(2+) as a cofactor.

The catalysed reaction is adenine + H2O + H(+) = hypoxanthine + NH4(+). The chain is Adenine deaminase from Methanococcoides burtonii (strain DSM 6242 / NBRC 107633 / OCM 468 / ACE-M).